Here is a 279-residue protein sequence, read N- to C-terminus: Nitrate import permease protein NrtB (279 aa).

The region spanning I86–A270 is the ABC transmembrane type-1 domain. The next 6 membrane-spanning stretches (helical) occupy residues L98–F118, I124–F144, A151–V171, V196–S216, W217–W237, and I249–I269.

The protein belongs to the binding-protein-dependent transport system permease family. CysTW subfamily. As to quaternary structure, the complex is composed of two ATP-binding proteins (NrtC and NrtD), two transmembrane proteins (NrtB) and a solute-binding protein (NrtA).

Its subcellular location is the cell inner membrane. Part of the ABC transporter complex NrtABCD involved in nitrate uptake. The complex is probably also involved in nitrite transport. Probably responsible for the translocation of the substrate across the membrane. The polypeptide is Nitrate import permease protein NrtB (Leptolyngbya laminosa (Phormidium laminosum)).